The chain runs to 386 residues: MEIFTTTRGTSAGPEPAPGGHGGTDSPRTSDLSLRALTGCVLCILIVSTLLGNALVCAAVIKFRHLRSKVTNAFVISLAVSDLFVAVLVMPWRAVSEVAGVWLFGAFCDTWVAFDIMCSTASILHLCIISMDRYWAISSPFRYERRMTPRFGCVMIGVAWTLSVLISFIPVQLNWHARGRERTDPGDCNASLNRTYAISSSLISFYIPVLIMVGTYTRIFRIGRTQIRRISSLERAAPRATRGPALCDEESSLKTSFRRETKVLKTLSVIMGVFVFCWLPFFVLNCMVPFCRLEPAAAPCVSDTTFSVFVWFGWANSSLNPVIYAFNADFRKAFSTILGCSRYCRTSAVEAVDFSNELASYHHDTTLQKEASSRGNSRGGPYQFAL.

Residues M1–T10 are compositionally biased toward polar residues. Residues M1–R28 are disordered. The Extracellular segment spans residues M1–R35. A helical membrane pass occupies residues A36 to V56. The Cytoplasmic portion of the chain corresponds to C57–N72. Residues A73–W92 form a helical membrane-spanning segment. The Extracellular portion of the chain corresponds to R93–D109. C108 and C188 are joined by a disulfide. Residues T110–M131 form a helical membrane-spanning segment. The Cytoplasmic segment spans residues D132–R150. A helical transmembrane segment spans residues F151 to W175. Residues H176–T195 are Extracellular-facing. 2 N-linked (GlcNAc...) asparagine glycosylation sites follow: N189 and N193. A helical membrane pass occupies residues Y196–F220. At R221–T266 the chain is on the cytoplasmic side. A helical membrane pass occupies residues L267 to R292. Residues L293–T305 are Extracellular-facing. A helical transmembrane segment spans residues F306–A325. At F326–L386 the chain is on the cytoplasmic side.

It belongs to the G-protein coupled receptor 1 family.

The protein localises to the cell membrane. Its subcellular location is the cell projection. It is found in the cilium membrane. Functionally, this is one of the five types (D1 to D5) of receptors for dopamine. The activity of this receptor is mediated by G proteins which activate adenylyl cyclase. This chain is D(1)-like dopamine receptor, found in Oreochromis mossambicus (Mozambique tilapia).